The chain runs to 157 residues: 2-C-methyl-D-erythritol 2,4-cyclodiphosphate synthase (157 aa).

Aspartate 8 and histidine 10 together coordinate a divalent metal cation. Residues 8-10 (DVH) and 34-35 (HS) each bind 4-CDP-2-C-methyl-D-erythritol 2-phosphate. Histidine 42 lines the a divalent metal cation pocket. 4-CDP-2-C-methyl-D-erythritol 2-phosphate contacts are provided by residues 56–58 (DIG), 61–65 (FPDTD), 100–106 (AQAPKML), 132–135 (TTTE), phenylalanine 139, and arginine 142.

This sequence belongs to the IspF family. In terms of assembly, homotrimer. The cofactor is a divalent metal cation.

It catalyses the reaction 4-CDP-2-C-methyl-D-erythritol 2-phosphate = 2-C-methyl-D-erythritol 2,4-cyclic diphosphate + CMP. Its pathway is isoprenoid biosynthesis; isopentenyl diphosphate biosynthesis via DXP pathway; isopentenyl diphosphate from 1-deoxy-D-xylulose 5-phosphate: step 4/6. Involved in the biosynthesis of isopentenyl diphosphate (IPP) and dimethylallyl diphosphate (DMAPP), two major building blocks of isoprenoid compounds. Catalyzes the conversion of 4-diphosphocytidyl-2-C-methyl-D-erythritol 2-phosphate (CDP-ME2P) to 2-C-methyl-D-erythritol 2,4-cyclodiphosphate (ME-CPP) with a corresponding release of cytidine 5-monophosphate (CMP). This is 2-C-methyl-D-erythritol 2,4-cyclodiphosphate synthase from Erwinia tasmaniensis (strain DSM 17950 / CFBP 7177 / CIP 109463 / NCPPB 4357 / Et1/99).